The sequence spans 359 residues: Fructose-bisphosphate aldolase class 2 (359 aa).

Position 9 is an N6-acetyllysine (K9). S62 provides a ligand contact to D-glyceraldehyde 3-phosphate. Catalysis depends on D110, which acts as the Proton donor. The Zn(2+) site is built by H111, D145, E175, and H227. Residue G228 coordinates dihydroxyacetone phosphate. H265 provides a ligand contact to Zn(2+). Dihydroxyacetone phosphate contacts are provided by residues 266-268 (GGS) and 287-290 (NIDT).

Belongs to the class II fructose-bisphosphate aldolase family. As to quaternary structure, homodimer. It depends on Zn(2+) as a cofactor.

The catalysed reaction is beta-D-fructose 1,6-bisphosphate = D-glyceraldehyde 3-phosphate + dihydroxyacetone phosphate. The protein operates within carbohydrate degradation; glycolysis; D-glyceraldehyde 3-phosphate and glycerone phosphate from D-glucose: step 4/4. Its function is as follows. Catalyzes the aldol condensation of dihydroxyacetone phosphate (DHAP or glycerone-phosphate) with glyceraldehyde 3-phosphate (G3P) to form fructose 1,6-bisphosphate (FBP) in gluconeogenesis and the reverse reaction in glycolysis. The chain is Fructose-bisphosphate aldolase class 2 (fbaA) from Escherichia coli O157:H7.